The following is a 278-amino-acid chain: Protein irg-2 (278 aa).

A disordered region spans residues 152–179 (NSIRGQPFKSLQPENRTPTQVTGHQQES). Residues 163–179 (QPENRTPTQVTGHQQES) are compositionally biased toward polar residues.

Its function is as follows. Plays a role in innate immunity by conferring resistance to virulent strains of the Gram-negative bacterium P.aeruginosa via the zip-2 pathway and independent of the pmk-1 p38MAPK pathway. Induced as part of several immune responses to translational inhibition arising from endocytosis of ToxA during P.aeruginosa infection or exposure to exogenous cycloheximide. The protein is Protein irg-2 of Caenorhabditis elegans.